Reading from the N-terminus, the 180-residue chain is ATP synthase subunit delta (180 aa).

The protein belongs to the ATPase delta chain family. As to quaternary structure, F-type ATPases have 2 components, F(1) - the catalytic core - and F(0) - the membrane proton channel. F(1) has five subunits: alpha(3), beta(3), gamma(1), delta(1), epsilon(1). F(0) has three main subunits: a(1), b(2) and c(10-14). The alpha and beta chains form an alternating ring which encloses part of the gamma chain. F(1) is attached to F(0) by a central stalk formed by the gamma and epsilon chains, while a peripheral stalk is formed by the delta and b chains.

It is found in the cell inner membrane. In terms of biological role, f(1)F(0) ATP synthase produces ATP from ADP in the presence of a proton or sodium gradient. F-type ATPases consist of two structural domains, F(1) containing the extramembraneous catalytic core and F(0) containing the membrane proton channel, linked together by a central stalk and a peripheral stalk. During catalysis, ATP synthesis in the catalytic domain of F(1) is coupled via a rotary mechanism of the central stalk subunits to proton translocation. Functionally, this protein is part of the stalk that links CF(0) to CF(1). It either transmits conformational changes from CF(0) to CF(1) or is implicated in proton conduction. The protein is ATP synthase subunit delta of Cupriavidus metallidurans (strain ATCC 43123 / DSM 2839 / NBRC 102507 / CH34) (Ralstonia metallidurans).